An 828-amino-acid chain; its full sequence is Periplasmic nitrate reductase (828 aa).

The tat-type signal signal peptide spans 1-31; it reads MKLSRRSFMKANAVAAAAAAAGLSVPGVARA. A 4Fe-4S Mo/W bis-MGD-type domain is found at 39-95; that stretch reads IKWDKAPCRFCGTGCGVLVGTQQGRVVACQGDPDAPVNRGLNCIKGYFLPKIMYGKD. Residues cysteine 46, cysteine 49, cysteine 53, and cysteine 81 each coordinate [4Fe-4S] cluster. Mo-bis(molybdopterin guanine dinucleotide)-binding positions include lysine 83, glutamine 150, asparagine 175, cysteine 179, 212-219, 243-247, 262-264, methionine 372, glutamine 376, asparagine 482, 508-509, lysine 531, aspartate 558, and 718-727; these read WGANMAEM, STYQH, QSD, SD, and TGRVLEHWHT. Residue phenylalanine 794 participates in substrate binding. Mo-bis(molybdopterin guanine dinucleotide)-binding residues include asparagine 802 and lysine 819.

It belongs to the prokaryotic molybdopterin-containing oxidoreductase family. NasA/NapA/NarB subfamily. In terms of assembly, component of the periplasmic nitrate reductase NapAB complex composed of NapA and NapB. [4Fe-4S] cluster is required as a cofactor. The cofactor is Mo-bis(molybdopterin guanine dinucleotide). Predicted to be exported by the Tat system. The position of the signal peptide cleavage has not been experimentally proven.

The protein resides in the periplasm. The catalysed reaction is 2 Fe(II)-[cytochrome] + nitrate + 2 H(+) = 2 Fe(III)-[cytochrome] + nitrite + H2O. In terms of biological role, catalytic subunit of the periplasmic nitrate reductase complex NapAB. Receives electrons from NapB and catalyzes the reduction of nitrate to nitrite. The chain is Periplasmic nitrate reductase from Shigella flexneri serotype 5b (strain 8401).